A 567-amino-acid polypeptide reads, in one-letter code: Dihydroxy-acid dehydratase (567 aa).

Cysteine 52 contacts [2Fe-2S] cluster. Residue aspartate 84 coordinates Mg(2+). Cysteine 125 contributes to the [2Fe-2S] cluster binding site. Mg(2+) is bound by residues aspartate 126 and lysine 127. Position 127 is an N6-carboxylysine (lysine 127). Cysteine 197 is a binding site for [2Fe-2S] cluster. Position 448 (glutamate 448) interacts with Mg(2+). The Proton acceptor role is filled by serine 474.

Belongs to the IlvD/Edd family. In terms of assembly, homodimer. Requires [2Fe-2S] cluster as cofactor. It depends on Mg(2+) as a cofactor.

The enzyme catalyses (2R)-2,3-dihydroxy-3-methylbutanoate = 3-methyl-2-oxobutanoate + H2O. The catalysed reaction is (2R,3R)-2,3-dihydroxy-3-methylpentanoate = (S)-3-methyl-2-oxopentanoate + H2O. It participates in amino-acid biosynthesis; L-isoleucine biosynthesis; L-isoleucine from 2-oxobutanoate: step 3/4. The protein operates within amino-acid biosynthesis; L-valine biosynthesis; L-valine from pyruvate: step 3/4. Functionally, functions in the biosynthesis of branched-chain amino acids. Catalyzes the dehydration of (2R,3R)-2,3-dihydroxy-3-methylpentanoate (2,3-dihydroxy-3-methylvalerate) into 2-oxo-3-methylpentanoate (2-oxo-3-methylvalerate) and of (2R)-2,3-dihydroxy-3-methylbutanoate (2,3-dihydroxyisovalerate) into 2-oxo-3-methylbutanoate (2-oxoisovalerate), the penultimate precursor to L-isoleucine and L-valine, respectively. This is Dihydroxy-acid dehydratase from Streptococcus pneumoniae (strain CGSP14).